The chain runs to 440 residues: Ran-specific GTPase-activating protein 30 (440 aa).

The RanBD1 domain maps to 1–314 (MDEILAKAGS…LVLKIDRSDD (314 aa)). Threonine 272 carries the post-translational modification Phosphothreonine. A compositionally biased stretch (acidic residues) spans 341–371 (IEEDEEEDEEEDEEEGKDGEERKEEEEEENK). The segment at 341-375 (IEEDEEEDEEEDEEEGKDGEERKEEEEEENKLEDK) is disordered.

In terms of assembly, interacts with GSP1.

The protein resides in the cytoplasm. It is found in the nucleus. Its function is as follows. Important for the export of protein containing nuclear export signal (NES) out of the nucleus. Stimulates the GTPase activity of GSP1. The polypeptide is Ran-specific GTPase-activating protein 30 (YRB30) (Saccharomyces cerevisiae (strain ATCC 204508 / S288c) (Baker's yeast)).